Consider the following 775-residue polypeptide: ADP-ribosylation factor GTPase-activating protein AGD4 (775 aa).

Residues 2 to 226 (ATFINLEDSP…IHQILTYAQQ (225 aa)) enclose the BAR domain. The 134-residue stretch at 288–421 (EVIKQGYLLK…WVNKITKAIG (134 aa)) folds into the PH domain. The 137-residue stretch at 467-603 (DDVSTILRGL…ALVIKDESEA (137 aa)) folds into the Arf-GAP domain. The C4-type zinc-finger motif lies at 482-505 (CAECNAPEPDWASLNLGVLLCIQC). 2 ANK repeats span residues 682 to 711 (QGCS…DLNI) and 715 to 744 (HGRT…RPSI).

Expressed in roots, hypocotyls, cotyledons, leaf and shoot apical meristems and siliques.

Probable GTPase-activating protein. This is ADP-ribosylation factor GTPase-activating protein AGD4 (AGD4) from Arabidopsis thaliana (Mouse-ear cress).